A 414-amino-acid polypeptide reads, in one-letter code: Hydroxysqualene dehydroxylase (414 aa).

The protein belongs to the HpnE family.

The enzyme catalyses squalene + FAD + H2O + H(+) = hydroxysqualene + FADH2. It participates in secondary metabolite biosynthesis; hopanoid biosynthesis. Involved in the biosynthesis of the hopanoid precursor squalene (SQ) from farnesyl diphosphate (FPP). Catalyzes the third (last) step, the reduction of hydroxysqualene (HSQ) to SQ. The protein is Hydroxysqualene dehydroxylase of Zymomonas mobilis subsp. mobilis (strain ATCC 31821 / ZM4 / CP4).